The following is a 90-amino-acid chain: Small ribosomal subunit protein uS15c (90 aa).

This sequence belongs to the universal ribosomal protein uS15 family. As to quaternary structure, part of the 30S ribosomal subunit.

The protein localises to the plastid. It is found in the chloroplast. The protein is Small ribosomal subunit protein uS15c (rps15) of Morus indica (Mulberry).